The sequence spans 261 residues: Uridine-cytidine kinase 2 (261 aa).

The segment at 1–24 is disordered; the sequence is MAGDSEQALPKHSPQNGQPFLIGV. An ATP-binding site is contributed by 26–34; the sequence is GGTASGKSS. Residues Asp83, Tyr111, His116, Arg165, Arg175, and Gln183 each contribute to the substrate site. ATP is bound at residue Asp212. Residues 238-247 are compositionally biased toward polar residues; it reads NGYTNGFTSP. Positions 238 to 261 are disordered; it reads NGYTNGFTSPRTRHPSDSNSSRPH.

It belongs to the uridine kinase family. As to quaternary structure, homotetramer.

It carries out the reaction uridine + ATP = UMP + ADP + H(+). The catalysed reaction is cytidine + ATP = CMP + ADP + H(+). It functions in the pathway pyrimidine metabolism; CTP biosynthesis via salvage pathway; CTP from cytidine: step 1/3. The protein operates within pyrimidine metabolism; UMP biosynthesis via salvage pathway; UMP from uridine: step 1/1. In terms of biological role, phosphorylates uridine and cytidine to uridine monophosphate and cytidine monophosphate. Does not phosphorylate deoxyribonucleosides or purine ribonucleosides. Can use ATP or GTP as a phosphate donor. In Xenopus tropicalis (Western clawed frog), this protein is Uridine-cytidine kinase 2 (uck2).